Reading from the N-terminus, the 148-residue chain is tRNA-specific adenosine deaminase (148 aa).

The CMP/dCMP-type deaminase domain maps to 1–116; it reads MEQALKQARL…SNLRYFNSSA (116 aa). Residue His-48 coordinates Zn(2+). The active-site Proton donor is the Glu-50. The Zn(2+) site is built by Cys-78 and Cys-81.

This sequence belongs to the cytidine and deoxycytidylate deaminase family. Homodimer. Zn(2+) is required as a cofactor.

The enzyme catalyses adenosine(34) in tRNA + H2O + H(+) = inosine(34) in tRNA + NH4(+). Catalyzes the deamination of adenosine to inosine at the wobble position 34 of tRNA(Arg2). The polypeptide is tRNA-specific adenosine deaminase (Rickettsia typhi (strain ATCC VR-144 / Wilmington)).